The sequence spans 863 residues: MNAGEFLAQTLSPDANVRLNAEKQLENAARTDFAQYMVLLAQELANDNSMPYIRMAAGLALKNAITAREEARKLEYQQLWQSLPVEIKQQVKSLALQTLGSSEHQAGQSAAQLVAAIAAYELATNQWPDLMVTLVANVGEGQPSALKQHSLQTIGYICESVSPEVLSAQSNAILTAVVAGARKEEPDAAVRLAALGALYDSLEFVRENFNNEYERNYIMQVVCEATQSPEASIQTAAFGCLVKIMHLYYDTMPFYMEKALFALTTQGMYNTNEQVALQAVEFWSTVCEEEIEVNLEIQEAQDLNEVPARQNHGFARAAAADILPVLLKLLCNQDEDADEDDWNISMAAATCLQLFAQVVGDLIVNPVLAFVEQNIQNPDWHQREAAVMAFGSVLEGPNVAMLTPLVNQALPVLINMMVDPVIFVKDTTAWALGQISSFVADAINPEIHLSPMVSALLQGLTDNPRIVANCCWAFMNLVCHFAPVDNHQTSVMTPFYEAIIGSLLHVTDQKGNENNSRTSGYETLGTLITFSSDSVLPMIANVLSIILTRLETSIQMQSQILDVEDRANHDELQSNLCNVLTSIIRRFGPDIRTSSDQIMNLLLQTMQTAPKQSVVHEDVLLAIGAMMNSLEEQFEVYVPSFVPFLSSALSNEQEYQLCSVAVGLVGDLARALNAKILPYCDDFMTRLVQDLQSSVLDRNVKPAILSCFSDIALAIGAAFQTYLEAVMVLLQQASSVQAPPGANFSMIDYVDALRLGIVEAYVGITQAVRTDNRLDLIQPYVHSMFTLLNMITADPECSESLTRAALGLLGDLAESFPKGELKSYFAADWVAALLNSGKTKISSQQTKDLARWATEQVKRQARA.

19 HEAT repeats span residues 2 to 31 (NAGE…AART), 33 to 62 (FAQY…LALK), 85 to 124 (VEIK…ELAT), 129 to 159 (DLMV…YICE), 170 to 201 (SNAI…LYDS), 212 to 248 (EYER…MHLY), 253 to 299 (PFYM…EIQE), 314 to 360 (FARA…QVVG), 364 to 392 (VNPV…AFGS), 399 to 439 (VAML…SSFV), 449 to 481 (LSPM…VCHF), 496 to 530 (YEAI…LITF), 536 to 586 (LPMI…IIRR), 592 to 630 (RTSS…MNSL), 635 to 671 (EVYV…LARA), 677 to 715 (LPYC…ALAI), 720 to 767 (QTYL…ITQA), 778 to 815 (QPYV…LAES), and 822 to 861 (KSYF…KRQA). Residues 21–101 (AEKQLENAAR…KSLALQTLGS (81 aa)) enclose the Importin N-terminal domain.

It belongs to the importin beta family. Importin beta-1 subfamily. Forms a complex with an importin alpha subunit. Interacts with Ran; interacts specifically with the GTP-bound form of Ran (GTP-Ran), protecting it from GTP hydrolysis and nucleotide exchange. Interacts with nucleoporins.

The protein localises to the cytoplasm. Its subcellular location is the nucleus envelope. The protein resides in the nucleus. It is found in the nuclear pore complex. In terms of biological role, importin beta subunit that functions in nuclear protein import through association with the importin alpha subunit, which binds to the clasical nuclear localization signal (cNLS) in cargo substrates. Docking of the importin/substrate complex to the nuclear pore complex (NPC) is mediated by importin beta through binding to nucleoporin FxFG repeats and the complex is subsequently translocated through the pore by an energy requiring, Ran-dependent mechanism. At the nucleoplasmic side of the NPC, GTP-Ran binds to importin beta and the three components separate, leading to release of the cargo. Importin alpha and beta are re-exported from the nucleus to the cytoplasm where GTP hydrolysis releases Ran from importin beta. The directionality of nuclear import is thought to be conferred by an asymmetric distribution of the GTP- and GDP-bound forms of Ran between the cytoplasm and nucleus. The sequence is that of Importin subunit beta-1 from Schizosaccharomyces pombe (strain 972 / ATCC 24843) (Fission yeast).